The primary structure comprises 401 residues: Protein IQ-DOMAIN 24 (401 aa).

Residues 1–48 (MGFFGRLFGSKKQEKATPNRRRWSFATRSSHPENDSSSHSSKRRGDED) form a disordered region. The calmodulin-binding stretch occupies residues 105-121 (EYKAAMKIQSAFRGYLA). IQ domains lie at 105 to 133 (EYKA…ALVK) and 134 to 156 (LQAL…RMQT). 2 stretches are compositionally biased toward low complexity: residues 165 to 176 (RASRSSHVSDSS) and 278 to 287 (RSRTGSSSGG). Disordered regions lie at residues 165–186 (RASR…IPSS) and 258–296 (SPRK…PFTP).

This sequence belongs to the IQD family. Binds to multiple calmodulin (CaM) in the presence of Ca(2+) and CaM-like proteins.

Its subcellular location is the nucleus. It is found in the nuclear body. It localises to the cell membrane. May be involved in cooperative interactions with calmodulins or calmodulin-like proteins. Recruits calmodulin proteins to microtubules, thus being a potential scaffold in cellular signaling and trafficking. May associate with nucleic acids and regulate gene expression at the transcriptional or post-transcriptional level. This is Protein IQ-DOMAIN 24 from Arabidopsis thaliana (Mouse-ear cress).